The primary structure comprises 579 residues: Arginine--tRNA ligase (579 aa).

Residues 123–133 (PNLAKEMHVGH) carry the 'HIGH' region motif.

The protein belongs to the class-I aminoacyl-tRNA synthetase family. As to quaternary structure, monomer.

It localises to the cytoplasm. The enzyme catalyses tRNA(Arg) + L-arginine + ATP = L-arginyl-tRNA(Arg) + AMP + diphosphate. This Cellvibrio japonicus (strain Ueda107) (Pseudomonas fluorescens subsp. cellulosa) protein is Arginine--tRNA ligase.